Consider the following 276-residue polypeptide: Shikimate dehydrogenase (NADP(+)) (276 aa).

Residues 20–22 (SRS) and threonine 67 contribute to the shikimate site. Lysine 71 functions as the Proton acceptor in the catalytic mechanism. Position 83 (aspartate 83) interacts with NADP(+). Shikimate-binding residues include asparagine 92 and aspartate 107. Residues 131-135 (GAGGA) and isoleucine 217 each bind NADP(+). Shikimate is bound at residue tyrosine 219. Glycine 240 lines the NADP(+) pocket.

The protein belongs to the shikimate dehydrogenase family. Homodimer.

It carries out the reaction shikimate + NADP(+) = 3-dehydroshikimate + NADPH + H(+). It functions in the pathway metabolic intermediate biosynthesis; chorismate biosynthesis; chorismate from D-erythrose 4-phosphate and phosphoenolpyruvate: step 4/7. In terms of biological role, involved in the biosynthesis of the chorismate, which leads to the biosynthesis of aromatic amino acids. Catalyzes the reversible NADPH linked reduction of 3-dehydroshikimate (DHSA) to yield shikimate (SA). The polypeptide is Shikimate dehydrogenase (NADP(+)) (Acidiphilium cryptum (strain JF-5)).